A 246-amino-acid polypeptide reads, in one-letter code: UDP-N-acetyl-D-mannosaminuronic acid transferase (246 aa).

This sequence belongs to the glycosyltransferase 26 family.

The enzyme catalyses UDP-N-acetyl-alpha-D-mannosaminouronate + N-acetyl-alpha-D-glucosaminyl-di-trans,octa-cis-undecaprenyl diphosphate = beta-D-ManNAcA-(1-&gt;4)-alpha-D-GlcNAc-di-trans,octa-cis-undecaprenyl diphosphate + UDP + H(+). Its pathway is bacterial outer membrane biogenesis; enterobacterial common antigen biosynthesis. In terms of biological role, catalyzes the synthesis of Und-PP-GlcNAc-ManNAcA (Lipid II), the second lipid-linked intermediate involved in enterobacterial common antigen (ECA) synthesis. This Citrobacter koseri (strain ATCC BAA-895 / CDC 4225-83 / SGSC4696) protein is UDP-N-acetyl-D-mannosaminuronic acid transferase.